The primary structure comprises 208 residues: Putative adhesin P1-like protein MPN_468 (208 aa).

Disordered stretches follow at residues 29 to 49 and 97 to 172; these read TNGS…VAPT and DSKT…NLTP. Positions 100-132 are enriched in low complexity; it reads TQNNTTTNENHTKFASATGSGQQQGSTTTTSAG. Residues 145-158 show a composition bias toward polar residues; sequence SGNSISVQEATSGD. Over residues 159-172 the composition is skewed to low complexity; that stretch reads NLTNYTNLPPNLTP.

The protein belongs to the adhesin P1 family.

In Mycoplasma pneumoniae (strain ATCC 29342 / M129 / Subtype 1) (Mycoplasmoides pneumoniae), this protein is Putative adhesin P1-like protein MPN_468.